The sequence spans 340 residues: 4-hydroxy-3-methylbut-2-enyl diphosphate reductase (340 aa).

Residue Cys19 participates in [4Fe-4S] cluster binding. (2E)-4-hydroxy-3-methylbut-2-enyl diphosphate is bound by residues His50 and His90. Dimethylallyl diphosphate-binding residues include His50 and His90. Isopentenyl diphosphate-binding residues include His50 and His90. Residue Cys112 participates in [4Fe-4S] cluster binding. His141 contributes to the (2E)-4-hydroxy-3-methylbut-2-enyl diphosphate binding site. Position 141 (His141) interacts with dimethylallyl diphosphate. An isopentenyl diphosphate-binding site is contributed by His141. Glu143 acts as the Proton donor in catalysis. Thr190 is a binding site for (2E)-4-hydroxy-3-methylbut-2-enyl diphosphate. A [4Fe-4S] cluster-binding site is contributed by Cys220. The (2E)-4-hydroxy-3-methylbut-2-enyl diphosphate site is built by Ser248, Ser249, Asn250, and Ser292. Positions 248, 249, 250, and 292 each coordinate dimethylallyl diphosphate. The isopentenyl diphosphate site is built by Ser248, Ser249, Asn250, and Ser292.

The protein belongs to the IspH family. It depends on [4Fe-4S] cluster as a cofactor.

The enzyme catalyses isopentenyl diphosphate + 2 oxidized [2Fe-2S]-[ferredoxin] + H2O = (2E)-4-hydroxy-3-methylbut-2-enyl diphosphate + 2 reduced [2Fe-2S]-[ferredoxin] + 2 H(+). It catalyses the reaction dimethylallyl diphosphate + 2 oxidized [2Fe-2S]-[ferredoxin] + H2O = (2E)-4-hydroxy-3-methylbut-2-enyl diphosphate + 2 reduced [2Fe-2S]-[ferredoxin] + 2 H(+). It functions in the pathway isoprenoid biosynthesis; dimethylallyl diphosphate biosynthesis; dimethylallyl diphosphate from (2E)-4-hydroxy-3-methylbutenyl diphosphate: step 1/1. The protein operates within isoprenoid biosynthesis; isopentenyl diphosphate biosynthesis via DXP pathway; isopentenyl diphosphate from 1-deoxy-D-xylulose 5-phosphate: step 6/6. In terms of biological role, catalyzes the conversion of 1-hydroxy-2-methyl-2-(E)-butenyl 4-diphosphate (HMBPP) into a mixture of isopentenyl diphosphate (IPP) and dimethylallyl diphosphate (DMAPP). Acts in the terminal step of the DOXP/MEP pathway for isoprenoid precursor biosynthesis. This Thermus thermophilus (strain ATCC BAA-163 / DSM 7039 / HB27) protein is 4-hydroxy-3-methylbut-2-enyl diphosphate reductase.